Reading from the N-terminus, the 24-residue chain is SM-11044-binding protein (24 aa).

Functionally, may mediate relaxation of depolarized colon tonus. It binds iodocyanopindolol and SM-11044. This Rattus norvegicus (Rat) protein is SM-11044-binding protein.